A 101-amino-acid chain; its full sequence is NAD(P)H-quinone oxidoreductase subunit 4L, chloroplastic (101 aa).

A run of 3 helical transmembrane segments spans residues 2 to 22, 32 to 52, and 61 to 81; these read MLEH…YGLI, MCLE…SDLF, and VFSI…PAIV.

The protein belongs to the complex I subunit 4L family. In terms of assembly, NDH is composed of at least 16 different subunits, 5 of which are encoded in the nucleus.

The protein resides in the plastid. It is found in the chloroplast thylakoid membrane. It carries out the reaction a plastoquinone + NADH + (n+1) H(+)(in) = a plastoquinol + NAD(+) + n H(+)(out). The catalysed reaction is a plastoquinone + NADPH + (n+1) H(+)(in) = a plastoquinol + NADP(+) + n H(+)(out). NDH shuttles electrons from NAD(P)H:plastoquinone, via FMN and iron-sulfur (Fe-S) centers, to quinones in the photosynthetic chain and possibly in a chloroplast respiratory chain. The immediate electron acceptor for the enzyme in this species is believed to be plastoquinone. Couples the redox reaction to proton translocation, and thus conserves the redox energy in a proton gradient. This Nuphar advena (Common spatterdock) protein is NAD(P)H-quinone oxidoreductase subunit 4L, chloroplastic.